The sequence spans 115 residues: Transmembrane protein 14C (115 aa).

A run of 4 helical transmembrane segments spans residues 8–28 (LVPL…GGII), 33–53 (AGSV…GLGA), 63–83 (VWVF…RFYN), and 88–108 (MPAG…VAKI).

This sequence belongs to the TMEM14 family.

The protein resides in the mitochondrion membrane. Functionally, required for normal heme biosynthesis. This chain is Transmembrane protein 14C (Tmem14c), found in Rattus norvegicus (Rat).